The following is a 265-amino-acid chain: Indole-3-glycerol phosphate synthase (265 aa).

The protein belongs to the TrpC family.

The enzyme catalyses 1-(2-carboxyphenylamino)-1-deoxy-D-ribulose 5-phosphate + H(+) = (1S,2R)-1-C-(indol-3-yl)glycerol 3-phosphate + CO2 + H2O. The protein operates within amino-acid biosynthesis; L-tryptophan biosynthesis; L-tryptophan from chorismate: step 4/5. In Xanthomonas axonopodis pv. citri (strain 306), this protein is Indole-3-glycerol phosphate synthase.